A 108-amino-acid chain; its full sequence is MIKTTLLFFATALCEIIGCFLPWLWLKRGASVFLLLPAGIALALFVWLLTLHPAASGRVYAAYGGVYVCTALLWLRVVDGVKLSAYDWAGALVALCGMLIIVAGWGRT.

Transmembrane regions (helical) follow at residues 6–26, 29–49, 61–81, and 85–105; these read LLFF…WLWL, GASV…VWLL, AAYG…VDGV, and AYDW…VAGW.

The protein belongs to the UPF0060 family.

Its subcellular location is the cell inner membrane. This chain is UPF0060 membrane protein Ent638_1931, found in Enterobacter sp. (strain 638).